Here is a 238-residue protein sequence, read N- to C-terminus: Ribonuclease PH (238 aa).

Residues arginine 86 and 124-126 (GTR) each bind phosphate.

This sequence belongs to the RNase PH family. In terms of assembly, homohexameric ring arranged as a trimer of dimers.

The catalysed reaction is tRNA(n+1) + phosphate = tRNA(n) + a ribonucleoside 5'-diphosphate. Phosphorolytic 3'-5' exoribonuclease that plays an important role in tRNA 3'-end maturation. Removes nucleotide residues following the 3'-CCA terminus of tRNAs; can also add nucleotides to the ends of RNA molecules by using nucleoside diphosphates as substrates, but this may not be physiologically important. Probably plays a role in initiation of 16S rRNA degradation (leading to ribosome degradation) during starvation. The chain is Ribonuclease PH from Pasteurella multocida (strain Pm70).